The primary structure comprises 804 residues: Probable basic-leucine zipper transcription factor C (804 aa).

Disordered stretches follow at residues 86-148 (FISP…NDIN) and 275-371 (YGNV…PKKR). A compositionally biased stretch (low complexity) spans 90–145 (NNNNNNNNNNNNNNNNNNNNNNNNNNNNNNNNNNNNNNNNNNNNNNNNNNNNNNNN). Residues 275–291 (YGNVSDNSSPETNFSYA) show a composition bias toward polar residues. Residues 292–334 (SPSSPSSTQSQSSPYEQQPLSPNPTISLSSSISVTATTTTRPN) show a composition bias toward low complexity. Residues 335-356 (ATEKTKESSLKSKSKSNEKDKE) show a composition bias toward basic and acidic residues. The region spanning 415 to 478 (ALNYQFRKIK…DQYKLQEKQK (64 aa)) is the bZIP domain. A basic motif region spans residues 421–436 (RKIKNRESARRSRERK). The leucine-zipper stretch occupies residues 443 to 450 (LEAKIAEI). The interval 670 to 693 (KNCNNNNENNNNNDNNKNSDDEKG) is disordered. Over residues 672–685 (CNNNNENNNNNDNN) the composition is skewed to low complexity.

The protein belongs to the bZIP family.

Its subcellular location is the nucleus. Probable transcriptional regulator. This chain is Probable basic-leucine zipper transcription factor C (bzpC), found in Dictyostelium discoideum (Social amoeba).